A 305-amino-acid polypeptide reads, in one-letter code: Olfactory receptor 4F5 (305 aa).

The Extracellular segment spans residues 1 to 18 (MVTEFIFLGLSDSQELQT). Residues 19–42 (FLFMLFFVFYGGIVFGNLLIVITV) traverse the membrane as a helical segment. At 43-50 (VSDSHLHS) the chain is on the cytoplasmic side. The chain crosses the membrane as a helical span at residues 51 to 72 (PMYFLLANLSLIDLSLSSVTAP). At 73-93 (KMITDFFSQRKVISFKGCLVQ) the chain is on the extracellular side. C90 and C182 are oxidised to a cystine. The helical transmembrane segment at 94–113 (IFLLHFFGGSEMVILIAMGF) threads the bilayer. Residues 114 to 132 (DRYIAICKPLHYTTIMCGN) lie on the Cytoplasmic side of the membrane. A helical transmembrane segment spans residues 133-151 (ACVGIMAVTWGIGFLHSVS). At 152–188 (QLAFAVHLLFCGPNEVDSFYCDLPRVIKLACTDTYRL) the chain is on the extracellular side. The helical transmembrane segment at 189 to 212 (DIMVIANSGVLTVCSFVLLIISYT) threads the bilayer. Residues 213–228 (IILMTIQHRPLDKSSK) lie on the Cytoplasmic side of the membrane. Residues 229-251 (ALSTLTAHITVVLLFFGPCVFIY) traverse the membrane as a helical segment. Residues 252 to 262 (AWPFPIKSLDK) lie on the Extracellular side of the membrane. Residues 263-282 (FLAVFYSVITPLLNPIIYTL) traverse the membrane as a helical segment. At 283-305 (RNKDMKTAIRQLRKWDAHSSVKF) the chain is on the cytoplasmic side.

The protein belongs to the G-protein coupled receptor 1 family.

The protein resides in the cell membrane. Odorant receptor. The chain is Olfactory receptor 4F5 (OR4F5) from Homo sapiens (Human).